A 327-amino-acid chain; its full sequence is Protein-L-isoaspartate O-methyltransferase (327 aa).

2 disordered regions span residues 1–38 (MSGERAKRFPLALEDLKREPRKPEGRAAERQAAGDAAR) and 62–105 (PRAA…KSAT). Positions 14–29 (EDLKREPRKPEGRAAE) are enriched in basic and acidic residues. Low complexity predominate over residues 62-77 (PRAAGASGSGVPVAKP). Over residues 92–105 (APSSGVKNGDKSAT) the composition is skewed to polar residues. Residue Ser-175 is part of the active site.

This sequence belongs to the methyltransferase superfamily. L-isoaspartyl/D-aspartyl protein methyltransferase family.

It is found in the cytoplasm. The catalysed reaction is [protein]-L-isoaspartate + S-adenosyl-L-methionine = [protein]-L-isoaspartate alpha-methyl ester + S-adenosyl-L-homocysteine. Its function is as follows. Catalyzes the methyl esterification of L-isoaspartyl residues in peptides and proteins that result from spontaneous decomposition of normal L-aspartyl and L-asparaginyl residues. It plays a role in the repair and/or degradation of damaged proteins. The chain is Protein-L-isoaspartate O-methyltransferase from Burkholderia thailandensis (strain ATCC 700388 / DSM 13276 / CCUG 48851 / CIP 106301 / E264).